A 180-amino-acid chain; its full sequence is NAD(P)H-quinone oxidoreductase subunit I, chloroplastic (180 aa).

4Fe-4S ferredoxin-type domains lie at 55 to 84 (GRIHFEFDKCIACEVCVRVCPIDLPVVDWK) and 95 to 124 (LNYSIDFGICIFCGNCVEYCPTNCLSMTEE). [4Fe-4S] cluster is bound by residues Cys-64, Cys-67, Cys-70, Cys-74, Cys-104, Cys-107, Cys-110, and Cys-114.

It belongs to the complex I 23 kDa subunit family. NDH is composed of at least 16 different subunits, 5 of which are encoded in the nucleus. [4Fe-4S] cluster serves as cofactor.

Its subcellular location is the plastid. It localises to the chloroplast thylakoid membrane. The catalysed reaction is a plastoquinone + NADH + (n+1) H(+)(in) = a plastoquinol + NAD(+) + n H(+)(out). It carries out the reaction a plastoquinone + NADPH + (n+1) H(+)(in) = a plastoquinol + NADP(+) + n H(+)(out). Functionally, NDH shuttles electrons from NAD(P)H:plastoquinone, via FMN and iron-sulfur (Fe-S) centers, to quinones in the photosynthetic chain and possibly in a chloroplast respiratory chain. The immediate electron acceptor for the enzyme in this species is believed to be plastoquinone. Couples the redox reaction to proton translocation, and thus conserves the redox energy in a proton gradient. The polypeptide is NAD(P)H-quinone oxidoreductase subunit I, chloroplastic (Ranunculus macranthus (Large buttercup)).